The chain runs to 158 residues: Aspartate carbamoyltransferase regulatory chain (158 aa).

Zn(2+) is bound by residues Cys111, Cys116, Cys140, and Cys143.

Belongs to the PyrI family. As to quaternary structure, contains catalytic and regulatory chains. Zn(2+) is required as a cofactor.

Functionally, involved in allosteric regulation of aspartate carbamoyltransferase. The sequence is that of Aspartate carbamoyltransferase regulatory chain from Metallosphaera sedula (strain ATCC 51363 / DSM 5348 / JCM 9185 / NBRC 15509 / TH2).